The sequence spans 496 residues: DEAD-box ATP-dependent RNA helicase 38 (496 aa).

Positions 1-91 (MADTVEKVPT…SGDTPYTSAS (91 aa)) are disordered. An N-acetylalanine modification is found at Ala2. Low complexity predominate over residues 7–25 (KVPTVVESSSSSTVEASNS). Basic and acidic residues predominate over residues 27 to 40 (EKTEPTTEKKKWGD). Over residues 41–51 (VEDDDDEEEAV) the composition is skewed to acidic residues. Residues 78–91 (KAVTSGDTPYTSAS) are compositionally biased toward polar residues. The Q motif motif lies at 91-120 (SRFEDLNLSPELMKGLYVEMKFEKPSKIQA). The region spanning 125-301 (MIMTPPHKHL…ARTVKDPNQL (177 aa)) is the Helicase ATP-binding domain. 138-145 (AHNGSGKT) contributes to the ATP binding site. A DEAD box motif is present at residues 245-248 (DEAD). Residues 329-483 (VIKDQIMELG…EIKSWNSEEE (155 aa)) enclose the Helicase C-terminal domain.

This sequence belongs to the DEAD box helicase family. DDX19/DBP5 subfamily. As to quaternary structure, interacts with NUP214 (via N-terminus). As to expression, constitutively expressed.

It localises to the cytoplasm. The protein localises to the nucleus. It carries out the reaction ATP + H2O = ADP + phosphate + H(+). Its function is as follows. ATP-dependent RNA helicase essential for mRNA export from the nucleus. Plays an important role in the positive regulation of CBF/DREB transcription factors. The sequence is that of DEAD-box ATP-dependent RNA helicase 38 (RH38) from Arabidopsis thaliana (Mouse-ear cress).